The primary structure comprises 338 residues: Aspartate carbamoyltransferase catalytic subunit (338 aa).

Carbamoyl phosphate-binding residues include Arg-59 and Thr-60. Residue Lys-87 coordinates L-aspartate. Carbamoyl phosphate contacts are provided by Arg-109, His-142, and Gln-145. Positions 182 and 248 each coordinate L-aspartate. Residues Gly-289 and Pro-290 each contribute to the carbamoyl phosphate site.

The protein belongs to the aspartate/ornithine carbamoyltransferase superfamily. ATCase family. In terms of assembly, heterododecamer (2C3:3R2) of six catalytic PyrB chains organized as two trimers (C3), and six regulatory PyrI chains organized as three dimers (R2).

It carries out the reaction carbamoyl phosphate + L-aspartate = N-carbamoyl-L-aspartate + phosphate + H(+). It participates in pyrimidine metabolism; UMP biosynthesis via de novo pathway; (S)-dihydroorotate from bicarbonate: step 2/3. Its function is as follows. Catalyzes the condensation of carbamoyl phosphate and aspartate to form carbamoyl aspartate and inorganic phosphate, the committed step in the de novo pyrimidine nucleotide biosynthesis pathway. In Synechococcus elongatus (strain ATCC 33912 / PCC 7942 / FACHB-805) (Anacystis nidulans R2), this protein is Aspartate carbamoyltransferase catalytic subunit.